We begin with the raw amino-acid sequence, 118 residues long: Large ribosomal subunit protein bL20 (118 aa).

This sequence belongs to the bacterial ribosomal protein bL20 family.

In terms of biological role, binds directly to 23S ribosomal RNA and is necessary for the in vitro assembly process of the 50S ribosomal subunit. It is not involved in the protein synthesizing functions of that subunit. This Pseudomonas syringae pv. syringae (strain B728a) protein is Large ribosomal subunit protein bL20.